Consider the following 260-residue polypeptide: Acyl-[acyl-carrier-protein]--UDP-N-acetylglucosamine O-acyltransferase (260 aa).

This sequence belongs to the transferase hexapeptide repeat family. LpxA subfamily. In terms of assembly, homotrimer.

It is found in the cytoplasm. The catalysed reaction is a (3R)-hydroxyacyl-[ACP] + UDP-N-acetyl-alpha-D-glucosamine = a UDP-3-O-[(3R)-3-hydroxyacyl]-N-acetyl-alpha-D-glucosamine + holo-[ACP]. The protein operates within glycolipid biosynthesis; lipid IV(A) biosynthesis; lipid IV(A) from (3R)-3-hydroxytetradecanoyl-[acyl-carrier-protein] and UDP-N-acetyl-alpha-D-glucosamine: step 1/6. Its function is as follows. Involved in the biosynthesis of lipid A, a phosphorylated glycolipid that anchors the lipopolysaccharide to the outer membrane of the cell. The polypeptide is Acyl-[acyl-carrier-protein]--UDP-N-acetylglucosamine O-acyltransferase (Sulfurovum sp. (strain NBC37-1)).